Here is a 1193-residue protein sequence, read N- to C-terminus: DNA polymerase (1193 aa).

The interval Met1 to Val88 is disordered. Over residues Pro48 to Pro68 the composition is skewed to low complexity.

This sequence belongs to the DNA polymerase type-B family. As to quaternary structure, heterodimer with the terminal protein; this heterodimer binds to bp 9 to 18 of the genome. Forms a complex with viral pTP, DBP and hosts NFIA and POU2F1/OCT1 for initiation of replication.

Its subcellular location is the host nucleus. The enzyme catalyses DNA(n) + a 2'-deoxyribonucleoside 5'-triphosphate = DNA(n+1) + diphosphate. Its function is as follows. Eukaryotic-type DNA polymerase involved in viral genomic replication. DNA synthesis is protein primed, and acts in a strand displacement replication. Assembles in complex with viral pTP, DBP, host NFIA and host POU2F1/OCT1 on viral origin of replication. The polymerase covalently transfers dCMP onto pTP, thereby initiating complementary strand synthesis. The sequence is that of DNA polymerase from Homo sapiens (Human).